The primary structure comprises 245 residues: Orotidine 5'-phosphate decarboxylase (245 aa).

Substrate contacts are provided by residues Asp-22, Lys-44, 71 to 80 (DLKFHDIPNT), Thr-131, Arg-192, Gln-201, Gly-221, and Arg-222. Residue Lys-73 is the Proton donor of the active site.

This sequence belongs to the OMP decarboxylase family. Type 1 subfamily. Homodimer.

It carries out the reaction orotidine 5'-phosphate + H(+) = UMP + CO2. Its pathway is pyrimidine metabolism; UMP biosynthesis via de novo pathway; UMP from orotate: step 2/2. In terms of biological role, catalyzes the decarboxylation of orotidine 5'-monophosphate (OMP) to uridine 5'-monophosphate (UMP). This is Orotidine 5'-phosphate decarboxylase from Escherichia fergusonii (strain ATCC 35469 / DSM 13698 / CCUG 18766 / IAM 14443 / JCM 21226 / LMG 7866 / NBRC 102419 / NCTC 12128 / CDC 0568-73).